Reading from the N-terminus, the 255-residue chain is Tabinhibitin 2 (255 aa).

The signal sequence occupies residues 1–23 (MISILVSRFLLAALVLQYATIDA). The short motif at 32 to 34 (RGD) is the Cell attachment site element. Residues 67 to 211 (LSKINDVRDH…KARALLTCNF (145 aa)) form the SCP domain.

Belongs to the CRISP family. As to expression, expressed in salivary glands.

It localises to the secreted. Functionally, inhibits platelet aggregation induced by all agonists tested (ADP, arachidonic acid, the thromboxane A2 analog U46619, thrombin, and snake venom snaclecs (TMVA that activates platelet through GPIB, and stejnulxin that specifically acts through GPVI (GP6))). May act by competing with fibrinogen for binding to glycoprotein IIb/IIIa (ITGA2B/ITGB3). The protein is Tabinhibitin 2 of Tabanus yao (Horsefly).